We begin with the raw amino-acid sequence, 299 residues long: Biotin transporter (299 aa).

Helical transmembrane passes span 2-22 (ALLI…GEYL), 26-46 (VDSY…FLPF), 56-76 (TVGL…MLSF), 81-101 (YLTV…ITLI), 110-130 (LRWG…IIRY), 137-157 (FWTG…GMVG), 172-192 (AFAW…FLLG), 202-222 (LQWG…YFMW), 233-253 (TLGI…LAIW), and 256-276 (QPHW…LWVH). 2 EamA domains span residues 3–128 (LLII…AGII) and 139–274 (TGLL…ASLW).

This sequence belongs to the drug/metabolite transporter (DMT) superfamily. 10 TMS drug/metabolite exporter (DME) (TC 2.A.7.3) family.

The protein resides in the cell inner membrane. It carries out the reaction biotin(in) = biotin(out). Functionally, uptake of biotin. The polypeptide is Biotin transporter (Escherichia coli O157:H7).